The following is a 414-amino-acid chain: MTYRAKSDFLNVMIERGYLADCTDMQALDDALIDGPVTAYIGYDATAASLHVGHLLNIMMLRWFQKTGNRPITLMGGGTTKVGDPSFRSEERPLLTPDKIDENIAGMKQVFARYLDYGDQGAMMLNNAEWLDSLNYLDFLRDIGRHFSVNRMLSFESVKSRLDREQSLSFLEFNYMILQAYDFLELYRRYGCRLQMGGSDQWGNIVNGIDLTRRVLDAEIWGLTSPLLTTSDGRKMGKSAGGAVWLNGAMLSPYEFWQFWRNTTDADVGRFLKLYTELPVEECDRLGALSGSEINAAKIILANEVTTLLHGADAAASAEATAREVFEQGGAGGDLEVVTLSADALASGLTVVQLLAQTGITASGKEAKRLIAEGGLRLNNEAVSDPQLAVDAALIGDGLKVSVGKKKHRMVQLG.

L-tyrosine is bound at residue Tyr-40. The short motif at 45-54 (ATAASLHVGH) is the 'HIGH' region element. Residues Tyr-175 and Gln-179 each coordinate L-tyrosine. A 'KMSKS' region motif is present at residues 235-239 (KMGKS). Lys-238 is an ATP binding site. Residues 349 to 414 (LTVVQLLAQT…KKKHRMVQLG (66 aa)) form the S4 RNA-binding domain.

Belongs to the class-I aminoacyl-tRNA synthetase family. TyrS type 1 subfamily. In terms of assembly, homodimer.

The protein localises to the cytoplasm. It carries out the reaction tRNA(Tyr) + L-tyrosine + ATP = L-tyrosyl-tRNA(Tyr) + AMP + diphosphate + H(+). Catalyzes the attachment of tyrosine to tRNA(Tyr) in a two-step reaction: tyrosine is first activated by ATP to form Tyr-AMP and then transferred to the acceptor end of tRNA(Tyr). This chain is Tyrosine--tRNA ligase, found in Paracoccus denitrificans (strain Pd 1222).